We begin with the raw amino-acid sequence, 663 residues long: Protein MICRORCHIDIA 6 (663 aa).

Residues 1–77 (MSHDRSVNVS…PADDAGVTSS (77 aa)) are disordered. Polar residues predominate over residues 49–62 (SVGQSAGQSSTSVV). The Nuclear localization signal motif lies at 552-559 (KRKEHPDS). Residues 614 to 659 (DRKVRSQNLEVKAMNLRSELENYKSEYERLMVELQALDLVKDEHRR) adopt a coiled-coil conformation.

Belongs to the MORC ATPase protein family. As to quaternary structure, homodimer and heterodimers with MORC1/CRT1 and MORC2. Interacts directly with SUVH9. Component of an RNA-directed DNA methylation (RdDM) complex that contains at least MORC6, MORC1/CRT1, MORC2, SWI3D and SUVH9. Stimulated by interaction with DMS3. Interacts with IDN2, SWI3B, SWI3C and SWI3D. The cofactor is Mg(2+). Mn(2+) is required as a cofactor.

The protein resides in the nucleus. With respect to regulation, stimulated by DMS3. Its function is as follows. Involved in RNA-directed DNA methylation (RdDM) as a component of the RdDM machinery and required for gene silencing. Together with SUVH2 and SUVH9, regulates the silencing of some transposable elements (TEs). Exhibits ATPase activity. May also be involved in the regulation of chromatin architecture/condensation to maintain gene silencing. Binds DNA/RNA in a non-specific manner and exhibits endonuclease activity. Probably involved in DNA repair. Positive regulator of defense against the oomycete Hyaloperonospora arabidopsidis (Hpa). The sequence is that of Protein MICRORCHIDIA 6 from Arabidopsis thaliana (Mouse-ear cress).